Reading from the N-terminus, the 258-residue chain is Granzyme M (258 aa).

A Peptidase S1 domain is found at 21–250 (IIGGREAVPH…YSSWIRKVIG (230 aa)). A disulfide bond links cysteine 46 and cysteine 62. Catalysis depends on charge relay system residues histidine 61 and aspartate 107. Positions 122–141 (NVKPLALPRKPRDKPAEGSR) are disordered. Intrachain disulfides connect cysteine 142-cysteine 210, cysteine 173-cysteine 189, and cysteine 200-cysteine 226. N-linked (GlcNAc...) asparagine glycosylation is present at asparagine 174. Serine 204 acts as the Charge relay system in catalysis. N-linked (GlcNAc...) asparagine glycosylation occurs at asparagine 225.

Belongs to the peptidase S1 family. Granzyme subfamily.

It localises to the secreted. It is found in the cytoplasmic granule. Its function is as follows. Cleaves peptide substrates after methionine, leucine, and norleucine. Physiological substrates include EZR, alpha-tubulins and the apoptosis inhibitor BIRC5/Survivin. Promotes caspase activation and subsequent apoptosis of target cells. The sequence is that of Granzyme M (Gzmm) from Rattus norvegicus (Rat).